We begin with the raw amino-acid sequence, 859 residues long: DNA mismatch repair protein MutS (859 aa).

612-619 (GPNMGGKS) serves as a coordination point for ATP. The interval 797–822 (SKPLAPSATPPSSYAAPSPAAAPAQA) is disordered.

This sequence belongs to the DNA mismatch repair MutS family.

In terms of biological role, this protein is involved in the repair of mismatches in DNA. It is possible that it carries out the mismatch recognition step. This protein has a weak ATPase activity. In Alcanivorax borkumensis (strain ATCC 700651 / DSM 11573 / NCIMB 13689 / SK2), this protein is DNA mismatch repair protein MutS.